The following is an 813-amino-acid chain: Protein tramtrack, alpha isoform (813 aa).

The BTB domain maps to 33-98 (TDVTLAVEGQ…MYRGEVSVDQ (66 aa)). 4 disordered regions span residues 118–148 (EVND…PQLQ), 171–324 (ANAG…GPSE), 356–428 (TTPA…MPKK), and 526–585 (AGLP…LDDQ). Residues 125-145 (SPAAAAAGAGATGSESTATTP) are compositionally biased toward low complexity. Over residues 176 to 187 (TPTLPVQPSLLS) the composition is skewed to polar residues. Residues 192–201 (PKRKRGRPRK) are compositionally biased toward basic residues. A phosphoserine mark is found at Ser203, Ser205, and Ser206. Thr209 carries the post-translational modification Phosphothreonine. Residues 254-285 (HTDDLNESRDSLPSKRSKNSKDHRVVSHHEDN) show a composition bias toward basic and acidic residues. Composition is skewed to polar residues over residues 302 to 324 (LFGS…GPSE), 356 to 369 (TTPA…TPTK), and 377 to 388 (ATGSNNSNSLLK). Positions 560 to 578 (SGKKGAKRPIQRRRVRRKA) are enriched in basic residues. C2H2-type zinc fingers lie at residues 610-638 (YRCT…FLYH) and 646-669 (FPCP…KMTH). Residue Ser682 is modified to Phosphoserine.

As to quaternary structure, interacts with CoRest/CG33525, suggesting that it acts by recruiting a CoRest-containing corepressor complex. Interacts with phyl.

Its subcellular location is the nucleus. Functionally, binds to a number of sites in the transcriptional regulatory region of ftz. Isoform alpha is required to repress genes that promote the R7 cell fate. Probable repressor of the transcription of the segmentation genes ftz, eve, h, odd, run, and en. May bind to the region 5'-AGGG[CT]GG-3'. Degradation of ttk is directed by binding of sinah or sina, via the adapter molecule phyl which binds to the BTB domain of ttk. The protein is Protein tramtrack, alpha isoform (ttk) of Drosophila melanogaster (Fruit fly).